A 550-amino-acid polypeptide reads, in one-letter code: Arginine--tRNA ligase (550 aa).

Positions 130-140 (ANPTGPIHLGG) match the 'HIGH' region motif.

It belongs to the class-I aminoacyl-tRNA synthetase family. Monomer.

It localises to the cytoplasm. It carries out the reaction tRNA(Arg) + L-arginine + ATP = L-arginyl-tRNA(Arg) + AMP + diphosphate. The protein is Arginine--tRNA ligase of Corynebacterium glutamicum (strain R).